Reading from the N-terminus, the 176-residue chain is Peptide deformylase 2 (176 aa).

The Fe cation site is built by Cys-99 and His-141. The active site involves Glu-142. His-145 serves as a coordination point for Fe cation.

The protein belongs to the polypeptide deformylase family. Fe(2+) serves as cofactor.

The enzyme catalyses N-terminal N-formyl-L-methionyl-[peptide] + H2O = N-terminal L-methionyl-[peptide] + formate. In terms of biological role, removes the formyl group from the N-terminal Met of newly synthesized proteins. Requires at least a dipeptide for an efficient rate of reaction. N-terminal L-methionine is a prerequisite for activity but the enzyme has broad specificity at other positions. The polypeptide is Peptide deformylase 2 (Bordetella bronchiseptica (strain ATCC BAA-588 / NCTC 13252 / RB50) (Alcaligenes bronchisepticus)).